The following is a 595-amino-acid chain: Arginine--tRNA ligase (595 aa).

The 'HIGH' region motif lies at 132 to 142 (ANPTGPLHVGH).

It belongs to the class-I aminoacyl-tRNA synthetase family. In terms of assembly, monomer.

The protein localises to the cytoplasm. The catalysed reaction is tRNA(Arg) + L-arginine + ATP = L-arginyl-tRNA(Arg) + AMP + diphosphate. The chain is Arginine--tRNA ligase from Cupriavidus necator (strain ATCC 17699 / DSM 428 / KCTC 22496 / NCIMB 10442 / H16 / Stanier 337) (Ralstonia eutropha).